The sequence spans 288 residues: Lysosomal thioesterase PPT2 homolog (288 aa).

Residues 1–22 (MRLRLQVLVALLTCSSISVSLA) form the signal peptide. S98 serves as the catalytic Nucleophile. An N-linked (GlcNAc...) asparagine glycan is attached at N192. Catalysis depends on residues D214 and H269.

It belongs to the palmitoyl-protein thioesterase family. In terms of tissue distribution, expressed in adult head and crop.

The protein resides in the lysosome. The catalysed reaction is hexadecanoyl-CoA + H2O = hexadecanoate + CoA + H(+). The enzyme catalyses S-hexadecanoyl-N-acetylcysteamine + H2O = N-acetylcysteamine + hexadecanoate + H(+). Its function is as follows. Catalyzes the cleavage of thioester bonds from S-palmitoyl-CoA or S-palmitoyl-N-acetylcysteamine (unbranched structures) but does not have activity against palmitoylcysteine or palmitoylated proteins, branched structures or bulky head groups. Conversely, hydrolyzes both long and short chain fatty acyl-CoA substrate. The sequence is that of Lysosomal thioesterase PPT2 homolog (Ppt2) from Drosophila melanogaster (Fruit fly).